Reading from the N-terminus, the 416-residue chain is Serine hydroxymethyltransferase (416 aa).

(6S)-5,6,7,8-tetrahydrofolate is bound by residues Leu-121 and 125 to 127; that span reads GHL. An N6-(pyridoxal phosphate)lysine modification is found at Lys-229.

Belongs to the SHMT family. Homodimer. The cofactor is pyridoxal 5'-phosphate.

It localises to the cytoplasm. It carries out the reaction (6R)-5,10-methylene-5,6,7,8-tetrahydrofolate + glycine + H2O = (6S)-5,6,7,8-tetrahydrofolate + L-serine. It functions in the pathway one-carbon metabolism; tetrahydrofolate interconversion. It participates in amino-acid biosynthesis; glycine biosynthesis; glycine from L-serine: step 1/1. Functionally, catalyzes the reversible interconversion of serine and glycine with tetrahydrofolate (THF) serving as the one-carbon carrier. This reaction serves as the major source of one-carbon groups required for the biosynthesis of purines, thymidylate, methionine, and other important biomolecules. Also exhibits THF-independent aldolase activity toward beta-hydroxyamino acids, producing glycine and aldehydes, via a retro-aldol mechanism. The polypeptide is Serine hydroxymethyltransferase (Dechloromonas aromatica (strain RCB)).